Here is an 854-residue protein sequence, read N- to C-terminus: MGMCSRQERIQKDIDVVIQKSRAEKDCLFADFRYSDSTFTFTYVGGPRSVSYSVHVSEDYPDNTYVSSSENDEDVLVTTEPIPVIFHRIATELRKTNDINCCLSIKSKLQKENGEESRQNSTVEEDSEGDNDSEEFYYGGQVNYDGELHKHPQLEADLSAVREIYGPHAVSLREYGAIDDVDIDLHIDVSFLDEEIAVAWEVIRTEPIIVRLHCSLTQYLNGPVPTVDVFQISTKERFGLGHQLKKIMQTFVTQQWKQSKEKSNCLHNKKLSEKKVKSPLHLFSTLRRSPSYPPPGCGKSKSKLKSEQDGISKTHKLLRRTCSSTVKTDDVCVTKSHRTFGRSLSSDPRAEQAMTAIKSHKLLNRPCPAAVKSEECLTLKSHRLLTRSCSGDPRCEHNTNLKPHKLLSRSYSSNLRMEELYGLKNHKLLSKSYSSAPKSSKTELFKEPNAEGRRLSLTSGLIGILTPSSSSSSQLAPNGAKCIPVRDRGFLVQTIEFAEQRIPVLNEYCVVCDEPHVFQNGPMLRPTVCERELCVFAFQTLGVMNEAADEIATGAQVVDLLVSMCRSALESPRKVVIFEPYPSVVDPNDPQMLAFNPRKKNYDRVMKALDSITSIREMTQAPYLEIKKQMDKQDPLAHPLLQWVISSNRSHIVKLPVNRQLKFMHTPHQFLLLSSPPAKESNFRAAKKLFGSTFAFHGSHIENWHSILRNGLVVASNTRLQLHGAMYGSGIYLSPMSSISFGYSGMNKKQKVSAKDEPASSSKSSNTSQSQKKGQQSQFLQSRNLKCIALCEVITSSDLHKHGEIWVVPNTDHVCTRFFFVYEDGQVGDANINTQEGGIHKEILRVIGNQTATG.

Disordered regions lie at residues 113 to 138 (NGEE…EFYY) and 291 to 310 (SYPP…EQDG). The span at 123 to 135 (VEEDSEGDNDSEE) shows a compositional bias: acidic residues. 4 positions are modified to ADP-ribosylcysteine: Cys332, Cys367, Cys376, and Cys395. The PARP catalytic domain occupies 617 to 844 (EMTQAPYLEI…QEGGIHKEIL (228 aa)). The disordered stretch occupies residues 750-777 (QKVSAKDEPASSSKSSNTSQSQKKGQQS). A compositionally biased stretch (low complexity) spans 760 to 777 (SSSKSSNTSQSQKKGQQS).

Belongs to the ARTD/PARP family. Post-translationally, auto-mono-ADP-ribosylated.

It catalyses the reaction L-cysteinyl-[protein] + NAD(+) = S-(ADP-D-ribosyl)-L-cysteinyl-[protein] + nicotinamide + H(+). Mono-ADP-ribosyltransferase that mediates mono-ADP-ribosylation of target proteins. This is Protein mono-ADP-ribosyltransferase PARP8 from Homo sapiens (Human).